The sequence spans 474 residues: Trehalose-6-phosphate synthase (474 aa).

A D-glucose 6-phosphate-binding site is contributed by Arg10. Residue 22–23 (GG) participates in UDP-alpha-D-glucose binding. D-glucose 6-phosphate contacts are provided by Tyr77 and Asp131. 2 residues coordinate UDP-alpha-D-glucose: Arg263 and Lys268. Arg301 is a binding site for D-glucose 6-phosphate. UDP-alpha-D-glucose-binding positions include Phe340 and 366 to 370 (LVAKE).

This sequence belongs to the glycosyltransferase 20 family. Homotetramer.

It carries out the reaction D-glucose 6-phosphate + UDP-alpha-D-glucose = alpha,alpha-trehalose 6-phosphate + UDP + H(+). The protein operates within glycan biosynthesis; trehalose biosynthesis. Probably involved in the osmoprotection via the biosynthesis of trehalose. Catalyzes the transfer of glucose from UDP-alpha-D-glucose (UDP-Glc) to D-glucose 6-phosphate (Glc-6-P) to form trehalose-6-phosphate. Acts with retention of the anomeric configuration of the UDP-sugar donor. This Cronobacter sakazakii (strain ATCC BAA-894) (Enterobacter sakazakii) protein is Trehalose-6-phosphate synthase.